The following is an 898-amino-acid chain: Alanine--tRNA ligase (898 aa).

Residues H589, H593, C693, and H697 each contribute to the Zn(2+) site.

This sequence belongs to the class-II aminoacyl-tRNA synthetase family. Zn(2+) is required as a cofactor.

The protein resides in the cytoplasm. It carries out the reaction tRNA(Ala) + L-alanine + ATP = L-alanyl-tRNA(Ala) + AMP + diphosphate. Functionally, catalyzes the attachment of alanine to tRNA(Ala) in a two-step reaction: alanine is first activated by ATP to form Ala-AMP and then transferred to the acceptor end of tRNA(Ala). Also edits incorrectly charged Ser-tRNA(Ala) and Gly-tRNA(Ala) via its editing domain. In Methanothermobacter thermautotrophicus (strain ATCC 29096 / DSM 1053 / JCM 10044 / NBRC 100330 / Delta H) (Methanobacterium thermoautotrophicum), this protein is Alanine--tRNA ligase.